A 285-amino-acid polypeptide reads, in one-letter code: Bifunctional protein FolD (285 aa).

NADP(+)-binding positions include 164-166 (GRS), Ser-189, and Ile-230.

This sequence belongs to the tetrahydrofolate dehydrogenase/cyclohydrolase family. Homodimer.

It carries out the reaction (6R)-5,10-methylene-5,6,7,8-tetrahydrofolate + NADP(+) = (6R)-5,10-methenyltetrahydrofolate + NADPH. The catalysed reaction is (6R)-5,10-methenyltetrahydrofolate + H2O = (6R)-10-formyltetrahydrofolate + H(+). Its pathway is one-carbon metabolism; tetrahydrofolate interconversion. Functionally, catalyzes the oxidation of 5,10-methylenetetrahydrofolate to 5,10-methenyltetrahydrofolate and then the hydrolysis of 5,10-methenyltetrahydrofolate to 10-formyltetrahydrofolate. The chain is Bifunctional protein FolD from Oceanobacillus iheyensis (strain DSM 14371 / CIP 107618 / JCM 11309 / KCTC 3954 / HTE831).